The primary structure comprises 203 residues: A-type ATP synthase subunit E (203 aa).

Belongs to the V-ATPase E subunit family. As to quaternary structure, has multiple subunits with at least A(3), B(3), C, D, E, F, H, I and proteolipid K(x).

The protein resides in the cell membrane. Functionally, component of the A-type ATP synthase that produces ATP from ADP in the presence of a proton gradient across the membrane. The polypeptide is A-type ATP synthase subunit E (Methanococcus maripaludis (strain C7 / ATCC BAA-1331)).